Reading from the N-terminus, the 260-residue chain is MTSLKLLKEKAPLVICITNDVVKNFTANGLVALGASPAMSEFPADLEDLLKYAGGLLINIGTLTDENWKLYQAALKIAEKYNVPAVLDPVACGAGEYRKKVADDLINNYKLAAIRGNAGEIASLVGIDVASKGVDSAGVDNIDEIALAANEKFNIPIVVTGEVDAIAVNGEVVTIHNGSAMMPKVIGTGCLLGAVVASFIGLEKGQELKSLETAMLVYNIAGEMAEKRPNGHLPGTFKVEFINALYEITDEDVKKFKRVK.

Met-39 contributes to the substrate binding site. Positions 115 and 160 each coordinate ATP. Gly-187 contacts substrate.

It belongs to the Thz kinase family. Mg(2+) serves as cofactor.

The enzyme catalyses 5-(2-hydroxyethyl)-4-methylthiazole + ATP = 4-methyl-5-(2-phosphooxyethyl)-thiazole + ADP + H(+). Its pathway is cofactor biosynthesis; thiamine diphosphate biosynthesis; 4-methyl-5-(2-phosphoethyl)-thiazole from 5-(2-hydroxyethyl)-4-methylthiazole: step 1/1. Its function is as follows. Catalyzes the phosphorylation of the hydroxyl group of 4-methyl-5-beta-hydroxyethylthiazole (THZ). In Streptococcus pneumoniae (strain P1031), this protein is Hydroxyethylthiazole kinase 1.